The chain runs to 327 residues: DNA-directed RNA polymerase subunit alpha (327 aa).

The alpha N-terminal domain (alpha-NTD) stretch occupies residues 1 to 233 (MVREKVKVST…NLFIPFLHVE (233 aa)). The interval 267–327 (LAFQYIFIDQ…KKILDILEKK (61 aa)) is alpha C-terminal domain (alpha-CTD).

It belongs to the RNA polymerase alpha chain family. In terms of assembly, in plastids the minimal PEP RNA polymerase catalytic core is composed of four subunits: alpha, beta, beta', and beta''. When a (nuclear-encoded) sigma factor is associated with the core the holoenzyme is formed, which can initiate transcription.

It is found in the plastid. It localises to the chloroplast. The catalysed reaction is RNA(n) + a ribonucleoside 5'-triphosphate = RNA(n+1) + diphosphate. Functionally, DNA-dependent RNA polymerase catalyzes the transcription of DNA into RNA using the four ribonucleoside triphosphates as substrates. The chain is DNA-directed RNA polymerase subunit alpha from Nasturtium officinale (Watercress).